Reading from the N-terminus, the 460-residue chain is Bifunctional protein GlmU (460 aa).

The interval 1 to 229 (MTNYAIILAA…FNESLGVNDR (229 aa)) is pyrophosphorylase. UDP-N-acetyl-alpha-D-glucosamine contacts are provided by residues 8 to 11 (LAAG), Lys-22, Gln-72, and 77 to 78 (GT). A Mg(2+)-binding site is contributed by Asp-102. 4 residues coordinate UDP-N-acetyl-alpha-D-glucosamine: Gly-139, Glu-154, Asn-169, and Asn-227. Asn-227 serves as a coordination point for Mg(2+). Residues 230 to 250 (VALATAETVMRQRITQKHMVN) form a linker region. The interval 251–460 (GVTFQNPETV…RLAHHPSRSK (210 aa)) is N-acetyltransferase. The UDP-N-acetyl-alpha-D-glucosamine site is built by Arg-332 and Lys-350. The Proton acceptor role is filled by His-362. The UDP-N-acetyl-alpha-D-glucosamine site is built by Tyr-365 and Asn-376. Residues Ala-379, 385–386 (NY), Ser-404, Ala-422, and Arg-439 contribute to the acetyl-CoA site.

This sequence in the N-terminal section; belongs to the N-acetylglucosamine-1-phosphate uridyltransferase family. In the C-terminal section; belongs to the transferase hexapeptide repeat family. As to quaternary structure, homotrimer. Mg(2+) is required as a cofactor.

It localises to the cytoplasm. The catalysed reaction is alpha-D-glucosamine 1-phosphate + acetyl-CoA = N-acetyl-alpha-D-glucosamine 1-phosphate + CoA + H(+). It catalyses the reaction N-acetyl-alpha-D-glucosamine 1-phosphate + UTP + H(+) = UDP-N-acetyl-alpha-D-glucosamine + diphosphate. The protein operates within nucleotide-sugar biosynthesis; UDP-N-acetyl-alpha-D-glucosamine biosynthesis; N-acetyl-alpha-D-glucosamine 1-phosphate from alpha-D-glucosamine 6-phosphate (route II): step 2/2. It participates in nucleotide-sugar biosynthesis; UDP-N-acetyl-alpha-D-glucosamine biosynthesis; UDP-N-acetyl-alpha-D-glucosamine from N-acetyl-alpha-D-glucosamine 1-phosphate: step 1/1. It functions in the pathway bacterial outer membrane biogenesis; LPS lipid A biosynthesis. Catalyzes the last two sequential reactions in the de novo biosynthetic pathway for UDP-N-acetylglucosamine (UDP-GlcNAc). The C-terminal domain catalyzes the transfer of acetyl group from acetyl coenzyme A to glucosamine-1-phosphate (GlcN-1-P) to produce N-acetylglucosamine-1-phosphate (GlcNAc-1-P), which is converted into UDP-GlcNAc by the transfer of uridine 5-monophosphate (from uridine 5-triphosphate), a reaction catalyzed by the N-terminal domain. This Streptococcus pyogenes serotype M12 (strain MGAS9429) protein is Bifunctional protein GlmU.